The sequence spans 435 residues: Trigger factor (435 aa).

In terms of domain architecture, PPIase FKBP-type spans 163–248; that stretch reads GDRVTIDFEG…LTRIEAQNLP (86 aa).

This sequence belongs to the FKBP-type PPIase family. Tig subfamily.

It localises to the cytoplasm. The catalysed reaction is [protein]-peptidylproline (omega=180) = [protein]-peptidylproline (omega=0). Its function is as follows. Involved in protein export. Acts as a chaperone by maintaining the newly synthesized protein in an open conformation. Functions as a peptidyl-prolyl cis-trans isomerase. This is Trigger factor from Leptothrix cholodnii (strain ATCC 51168 / LMG 8142 / SP-6) (Leptothrix discophora (strain SP-6)).